A 344-amino-acid chain; its full sequence is E3 ubiquitin-protein ligase RING2-A (344 aa).

The tract at residues 2–181 is interaction with HIP2; the sequence is ATPVNAQCSS…EDNCDSRSHV (180 aa). An RING-type zinc finger spans residues 48 to 88; that stretch reads CPICLDMLKNTMTTKECLHRFCSDCIVTALRSGNKECPTCR. An interaction with nucleosomes via an acidic patch on histone H2A and histone H2B region spans residues 90 to 95; that stretch reads KLVSKR. The segment at 148-230 is disordered; it reads QAMHRAQRVR…DPPGGGETGS (83 aa). Residues 180 to 192 are compositionally biased toward polar residues; that stretch reads HVSNPSVHSNQEA.

In terms of assembly, component of chromatin-associated Polycomb (PcG) complexes. Component of a PRC1-like complex. Component of some MLL1/MLL complex.

It localises to the nucleus. It is found in the cytoplasm. Its subcellular location is the chromosome. It carries out the reaction S-ubiquitinyl-[E2 ubiquitin-conjugating enzyme]-L-cysteine + [acceptor protein]-L-lysine = [E2 ubiquitin-conjugating enzyme]-L-cysteine + N(6)-ubiquitinyl-[acceptor protein]-L-lysine.. Its pathway is protein modification; protein ubiquitination. E3 ubiquitin-protein ligase that mediates monoubiquitination of 'Lys-119' of histone H2A (H2AK119Ub), thereby playing a central role in histone code and gene regulation. H2AK119Ub gives a specific tag for epigenetic transcriptional repression. Essential component of a Polycomb group (PcG) multiprotein PRC1-like complex, a complex class required to maintain the transcriptionally repressive state of many genes, including Hox genes, throughout development. PcG PRC1 complex acts via chromatin remodeling and modification of histones, rendering chromatin heritably changed in its expressibility. This Xenopus laevis (African clawed frog) protein is E3 ubiquitin-protein ligase RING2-A (rnf2-a).